The primary structure comprises 957 residues: Glycine dehydrogenase (decarboxylating) (957 aa).

Lys708 carries the post-translational modification N6-(pyridoxal phosphate)lysine.

This sequence belongs to the GcvP family. The glycine cleavage system is composed of four proteins: P, T, L and H. It depends on pyridoxal 5'-phosphate as a cofactor.

The enzyme catalyses N(6)-[(R)-lipoyl]-L-lysyl-[glycine-cleavage complex H protein] + glycine + H(+) = N(6)-[(R)-S(8)-aminomethyldihydrolipoyl]-L-lysyl-[glycine-cleavage complex H protein] + CO2. Its function is as follows. The glycine cleavage system catalyzes the degradation of glycine. The P protein binds the alpha-amino group of glycine through its pyridoxal phosphate cofactor; CO(2) is released and the remaining methylamine moiety is then transferred to the lipoamide cofactor of the H protein. This is Glycine dehydrogenase (decarboxylating) from Shigella boydii serotype 4 (strain Sb227).